The following is a 371-amino-acid chain: Ribosomal RNA small subunit methyltransferase H (371 aa).

S-adenosyl-L-methionine-binding positions include 43–45 (GGH), D62, L96, D110, and Q117. The tract at residues 315–371 (AAERLDPTQQQRQRTDRERYRRQVRAMHQPGTGSAVRRPVSGDDGTGTDEEGEGHDD) is disordered. The span at 360 to 371 (TGTDEEGEGHDD) shows a compositional bias: acidic residues.

It belongs to the methyltransferase superfamily. RsmH family.

The protein resides in the cytoplasm. The enzyme catalyses cytidine(1402) in 16S rRNA + S-adenosyl-L-methionine = N(4)-methylcytidine(1402) in 16S rRNA + S-adenosyl-L-homocysteine + H(+). Specifically methylates the N4 position of cytidine in position 1402 (C1402) of 16S rRNA. This is Ribosomal RNA small subunit methyltransferase H from Salinispora tropica (strain ATCC BAA-916 / DSM 44818 / JCM 13857 / NBRC 105044 / CNB-440).